Consider the following 357-residue polypeptide: Peptide chain release factor 1 (357 aa).

Residue glutamine 234 is modified to N5-methylglutamine.

It belongs to the prokaryotic/mitochondrial release factor family. Methylated by PrmC. Methylation increases the termination efficiency of RF1.

It localises to the cytoplasm. Peptide chain release factor 1 directs the termination of translation in response to the peptide chain termination codons UAG and UAA. This is Peptide chain release factor 1 from Arthrobacter sp. (strain FB24).